The chain runs to 139 residues: Protein archease (139 aa).

Residues D12, D138, and I139 each coordinate Ca(2+).

The protein belongs to the archease family.

Functionally, activates the tRNA-splicing ligase complex by facilitating the enzymatic turnover of catalytic subunit RtcB. Acts by promoting the guanylylation of RtcB, a key intermediate step in tRNA ligation. Can also alter the NTP specificity of RtcB such that ATP, dGTP or ITP is used efficiently. The chain is Protein archease from Sulfolobus acidocaldarius (strain ATCC 33909 / DSM 639 / JCM 8929 / NBRC 15157 / NCIMB 11770).